Here is a 445-residue protein sequence, read N- to C-terminus: Exodeoxyribonuclease 7 large subunit (445 aa).

This sequence belongs to the XseA family. Heterooligomer composed of large and small subunits.

It localises to the cytoplasm. It carries out the reaction Exonucleolytic cleavage in either 5'- to 3'- or 3'- to 5'-direction to yield nucleoside 5'-phosphates.. Functionally, bidirectionally degrades single-stranded DNA into large acid-insoluble oligonucleotides, which are then degraded further into small acid-soluble oligonucleotides. In Staphylococcus haemolyticus (strain JCSC1435), this protein is Exodeoxyribonuclease 7 large subunit.